Consider the following 141-residue polypeptide: Putative pre-16S rRNA nuclease (141 aa).

The protein belongs to the YqgF nuclease family.

Its subcellular location is the cytoplasm. Its function is as follows. Could be a nuclease involved in processing of the 5'-end of pre-16S rRNA. The polypeptide is Putative pre-16S rRNA nuclease (Natranaerobius thermophilus (strain ATCC BAA-1301 / DSM 18059 / JW/NM-WN-LF)).